A 467-amino-acid chain; its full sequence is ATP synthase subunit beta, sodium ion specific (467 aa).

151 to 158 is a binding site for ATP; sequence GGAGVGKT.

Belongs to the ATPase alpha/beta chains family. As to quaternary structure, F-type ATPases have 2 components, CF(1) - the catalytic core - and CF(0) - the membrane proton channel. CF(1) has five subunits: alpha(3), beta(3), gamma(1), delta(1), epsilon(1). CF(0) has three main subunits: a, b and c.

The protein resides in the cell membrane. The catalysed reaction is 4 Na(+)(in) + ATP + H2O = 4 Na(+)(out) + ADP + phosphate + H(+). Produces ATP from ADP in the presence of a sodium ion gradient across the membrane. The beta chain is the catalytic subunit. In Propionigenium modestum, this protein is ATP synthase subunit beta, sodium ion specific.